Here is a 139-residue protein sequence, read N- to C-terminus: Large ribosomal subunit protein uL16 (139 aa).

It belongs to the universal ribosomal protein uL16 family. Part of the 50S ribosomal subunit.

Functionally, binds 23S rRNA and is also seen to make contacts with the A and possibly P site tRNAs. The chain is Large ribosomal subunit protein uL16 from Gloeothece citriformis (strain PCC 7424) (Cyanothece sp. (strain PCC 7424)).